The sequence spans 376 residues: N-acetyldiaminopimelate deacetylase (376 aa).

Residue D69 is part of the active site. E128 serves as the catalytic Proton acceptor.

The protein belongs to the peptidase M20A family. N-acetyldiaminopimelate deacetylase subfamily.

The catalysed reaction is N-acetyl-(2S,6S)-2,6-diaminopimelate + H2O = (2S,6S)-2,6-diaminopimelate + acetate. Its pathway is amino-acid biosynthesis; L-lysine biosynthesis via DAP pathway; LL-2,6-diaminopimelate from (S)-tetrahydrodipicolinate (acetylase route): step 3/3. Its function is as follows. Catalyzes the conversion of N-acetyl-diaminopimelate to diaminopimelate and acetate. This chain is N-acetyldiaminopimelate deacetylase, found in Bacillus cereus (strain B4264).